The primary structure comprises 683 residues: WD repeat-containing protein 48 homolog (683 aa).

WD repeat units lie at residues 27–82 (SNRS…PVQY), 88–130 (QHTD…FIDC), 133–167 (THKD…INAN), 176–215 (GCKD…KIMK), 218–257 (GHTD…CIAT), 260–299 (AHEE…KSQL), and 302–343 (KEEA…QLSI). Positions 341 to 364 (LSIGGDEDGPSTSNANHSVSASSS) are disordered. Residues 351–364 (STSNANHSVSASSS) show a composition bias toward low complexity. The stretch at 389–428 (PGAPAIKKHAMLSDKRHVLTRDSDGNVALYDVLAARKIKD) is one WD 8 repeat.

The protein belongs to the WD repeat WDR48 family. As to quaternary structure, interacts with usp-46; the interaction increases the catalytic activity of usp-46 in the presence of wdr-20. Expressed in several head neurons and cells in the tail including the anal depressor cell.

Its function is as follows. Together with wdr-20, binds to and stimulates the activity of the deubiquitinating enzyme usp-46, leading to deubiquitination and stabilization of the glr-1 glutamate receptor. The chain is WD repeat-containing protein 48 homolog (wdr-48) from Caenorhabditis elegans.